Consider the following 116-residue polypeptide: MAQYRVGRLEQEIQREVTDILLKRVRDPRVEGVTVTGVEVTGDLQQATIYYSILSDKASSAEKTAAGLKKATGLIRSELGSRLSIYKTPELTFEQDGSVRYGSRIDELLNDLHHQD.

This sequence belongs to the RbfA family. As to quaternary structure, monomer. Binds 30S ribosomal subunits, but not 50S ribosomal subunits or 70S ribosomes.

It is found in the cytoplasm. Its function is as follows. One of several proteins that assist in the late maturation steps of the functional core of the 30S ribosomal subunit. Associates with free 30S ribosomal subunits (but not with 30S subunits that are part of 70S ribosomes or polysomes). Required for efficient processing of 16S rRNA. May interact with the 5'-terminal helix region of 16S rRNA. This Levilactobacillus brevis (strain ATCC 367 / BCRC 12310 / CIP 105137 / JCM 1170 / LMG 11437 / NCIMB 947 / NCTC 947) (Lactobacillus brevis) protein is Ribosome-binding factor A.